The sequence spans 1746 residues: Non-reducing polyketide synthase ptaA (1746 aa).

The N-terminal acylcarrier protein transacylase domain (SAT) stretch occupies residues 4–227; it reads NSGSGTSPWG…ALPVYGGLCH (224 aa). Residues 361–796 enclose the Ketosynthase family 3 (KS3) domain; that stretch reads QSKIAIVGMS…GGNTTIAIEE (436 aa). Residues Cys534, His670, and His714 each act as for beta-ketoacyl synthase activity in the active site. A malonyl-CoA:ACP transacylase (MAT) domain region spans residues 898–1218; the sequence is FAFTGQGASY…LGALHLAGIP (321 aa). The product template (PT) domain stretch occupies residues 1286–1605; that stretch reads TSTVHRVIGE…RLLLDRFFSA (320 aa). The interval 1290–1425 is N-terminal hotdog fold; sequence HRVIGETFDG…ATLFYGKAND (136 aa). In terms of domain architecture, PKS/mFAS DH spans 1290 to 1600; it reads HRVIGETFDG…FRRYPRLLLD (311 aa). Catalysis depends on His1322, which acts as the Proton acceptor; for dehydratase activity. The C-terminal hotdog fold stretch occupies residues 1452–1600; sequence VANRFSRNMA…FRRYPRLLLD (149 aa). Residue Asp1511 is the Proton donor; for dehydratase activity of the active site. Residues 1671 to 1745 form the Carrier domain; the sequence is DSITVKAMAL…DLRAWLLEYY (75 aa). Ser1705 bears the O-(pantetheine 4'-phosphoryl)serine mark.

It carries out the reaction holo-[ACP] + 8 malonyl-CoA + 8 H(+) = atrochrysone carboxyl-[ACP] + 8 CO2 + 8 CoA + 2 H2O. It participates in secondary metabolite biosynthesis. Functionally, non-reducing polyketide synthase; part of the gene cluster that mediates the biosynthesis of pestheic acid, a diphenyl ether which is a biosynthetic precursor of the unique chloropupukeananes. The biosynthesis initiates from condensation of acetate and malonate units catalyzed by the non-reducing PKS ptaA. As the ptaA protein is TE/CLC domain-deficient, hydrolysis and Claisen cyclization of the polyketide could be catalyzed by ptaB containing a beta-lactamase domain. The ptaB protein might hydrolyze the thioester bond between the ACP of ptaA and the intermediate to release atrochrysone carboxylic acid, which is spontaneously dehydrated to form endocrocin anthrone. Endocrocin anthrone is then converted to endocrocin, catalyzed by the anthrone oxygenase ptaC. Spontaneous decarboxylation of endocrocin occurs to generate emodin. An O-methyltransferase (ptaH or ptaI) could methylate emodin to form physcion. PtaJ could then catalyze the oxidative cleavage of physcion, and rotation of the intermediate could then afford desmethylisosulochrin. PtaF, a putative NADH-dependent oxidoreductase, might also participate in the oxidative cleavage step. Desmethylisosulochrin is then transformed by another O-methyltransferase (ptaH or ptaI) to form isosulochrin. Chlorination of isosulochrin by ptaM in the cyclohexadienone B ring then produces chloroisosulochrin. PtaE is responsible for the oxidative coupling reactions of both benzophenones isosulochrin and chloroisosulochrin to RES-1214-1 and pestheic acid respectively, regardless of chlorination. In Pestalotiopsis fici (strain W106-1 / CGMCC3.15140), this protein is Non-reducing polyketide synthase ptaA.